The primary structure comprises 104 residues: Large ribosomal subunit protein bL21 (104 aa).

It belongs to the bacterial ribosomal protein bL21 family. As to quaternary structure, part of the 50S ribosomal subunit. Contacts protein L20.

Its function is as follows. This protein binds to 23S rRNA in the presence of protein L20. In Gluconobacter oxydans (strain 621H) (Gluconobacter suboxydans), this protein is Large ribosomal subunit protein bL21.